A 692-amino-acid polypeptide reads, in one-letter code: Polyphosphate kinase (692 aa).

An ATP-binding site is contributed by N57. Positions 383 and 413 each coordinate Mg(2+). H443 (phosphohistidine intermediate) is an active-site residue. Y476, R572, and H600 together coordinate ATP.

This sequence belongs to the polyphosphate kinase 1 (PPK1) family. Requires Mg(2+) as cofactor. Post-translationally, an intermediate of this reaction is the autophosphorylated ppk in which a phosphate is covalently linked to a histidine residue through a N-P bond.

The catalysed reaction is [phosphate](n) + ATP = [phosphate](n+1) + ADP. Catalyzes the reversible transfer of the terminal phosphate of ATP to form a long-chain polyphosphate (polyP). The protein is Polyphosphate kinase of Acinetobacter baumannii (strain AYE).